We begin with the raw amino-acid sequence, 402 residues long: 1-deoxy-D-xylulose 5-phosphate reductoisomerase (402 aa).

NADPH contacts are provided by threonine 25, glycine 26, serine 27, valine 28, arginine 52, asparagine 53, and asparagine 136. Lysine 137 is a binding site for 1-deoxy-D-xylulose 5-phosphate. NADPH is bound at residue glutamate 138. Aspartate 162 is a Mn(2+) binding site. Residues serine 163, glutamate 164, serine 188, and histidine 211 each contribute to the 1-deoxy-D-xylulose 5-phosphate site. A Mn(2+)-binding site is contributed by glutamate 164. Glycine 217 lines the NADPH pocket. The 1-deoxy-D-xylulose 5-phosphate site is built by serine 224, asparagine 229, lysine 230, and glutamate 233. Glutamate 233 contacts Mn(2+).

This sequence belongs to the DXR family. The cofactor is Mg(2+). It depends on Mn(2+) as a cofactor.

The enzyme catalyses 2-C-methyl-D-erythritol 4-phosphate + NADP(+) = 1-deoxy-D-xylulose 5-phosphate + NADPH + H(+). The protein operates within isoprenoid biosynthesis; isopentenyl diphosphate biosynthesis via DXP pathway; isopentenyl diphosphate from 1-deoxy-D-xylulose 5-phosphate: step 1/6. Functionally, catalyzes the NADPH-dependent rearrangement and reduction of 1-deoxy-D-xylulose-5-phosphate (DXP) to 2-C-methyl-D-erythritol 4-phosphate (MEP). This Rhodospirillum centenum (strain ATCC 51521 / SW) protein is 1-deoxy-D-xylulose 5-phosphate reductoisomerase.